Consider the following 145-residue polypeptide: D-aminoacyl-tRNA deacylase (145 aa).

The Gly-cisPro motif, important for rejection of L-amino acids signature appears at 137-138; that stretch reads GP.

This sequence belongs to the DTD family. In terms of assembly, homodimer.

Its subcellular location is the cytoplasm. It carries out the reaction glycyl-tRNA(Ala) + H2O = tRNA(Ala) + glycine + H(+). It catalyses the reaction a D-aminoacyl-tRNA + H2O = a tRNA + a D-alpha-amino acid + H(+). In terms of biological role, an aminoacyl-tRNA editing enzyme that deacylates mischarged D-aminoacyl-tRNAs. Also deacylates mischarged glycyl-tRNA(Ala), protecting cells against glycine mischarging by AlaRS. Acts via tRNA-based rather than protein-based catalysis; rejects L-amino acids rather than detecting D-amino acids in the active site. By recycling D-aminoacyl-tRNA to D-amino acids and free tRNA molecules, this enzyme counteracts the toxicity associated with the formation of D-aminoacyl-tRNA entities in vivo and helps enforce protein L-homochirality. The sequence is that of D-aminoacyl-tRNA deacylase from Alcanivorax borkumensis (strain ATCC 700651 / DSM 11573 / NCIMB 13689 / SK2).